Here is a 156-residue protein sequence, read N- to C-terminus: Small ribosomal subunit protein uS7 (156 aa).

Belongs to the universal ribosomal protein uS7 family. As to quaternary structure, part of the 30S ribosomal subunit. Contacts proteins S9 and S11.

One of the primary rRNA binding proteins, it binds directly to 16S rRNA where it nucleates assembly of the head domain of the 30S subunit. Is located at the subunit interface close to the decoding center, probably blocks exit of the E-site tRNA. The chain is Small ribosomal subunit protein uS7 from Methylorubrum populi (strain ATCC BAA-705 / NCIMB 13946 / BJ001) (Methylobacterium populi).